Consider the following 421-residue polypeptide: ATP phosphoribosyltransferase regulatory subunit (421 aa).

Belongs to the class-II aminoacyl-tRNA synthetase family. HisZ subfamily. Heteromultimer composed of HisG and HisZ subunits.

Its subcellular location is the cytoplasm. The protein operates within amino-acid biosynthesis; L-histidine biosynthesis; L-histidine from 5-phospho-alpha-D-ribose 1-diphosphate: step 1/9. Its function is as follows. Required for the first step of histidine biosynthesis. May allow the feedback regulation of ATP phosphoribosyltransferase activity by histidine. This Clostridium novyi (strain NT) protein is ATP phosphoribosyltransferase regulatory subunit.